The primary structure comprises 109 residues: Ferredoxin (109 aa).

4Fe-4S ferredoxin-type domains are found at residues 2-30 and 31-60; these read TYVV…YEGE and FMLV…PESP. The [3Fe-4S] cluster site is built by Cys9 and Cys17. Residues Cys21, Cys40, Cys43, and Cys46 each contribute to the [4Fe-4S] cluster site. Cys50 lines the [3Fe-4S] cluster pocket.

The cofactor is [4Fe-4S] cluster. [3Fe-4S] cluster serves as cofactor.

Its function is as follows. Ferredoxins are iron-sulfur proteins that transfer electrons in a wide variety of metabolic reactions. In Rickettsia felis (strain ATCC VR-1525 / URRWXCal2) (Rickettsia azadi), this protein is Ferredoxin (fdxA).